Here is a 137-residue protein sequence, read N- to C-terminus: Putative FERT-1 protein (137 aa).

The protein is Putative FERT-1 protein (FERT-1) of Ascaris suum (Pig roundworm).